Consider the following 369-residue polypeptide: uncharacterized protein (369 aa).

Belongs to the Gfo/Idh/MocA family.

This is an uncharacterized protein from Schizosaccharomyces pombe (strain 972 / ATCC 24843) (Fission yeast).